Consider the following 461-residue polypeptide: V-type ATP synthase beta chain (461 aa).

It belongs to the ATPase alpha/beta chains family.

Its function is as follows. Produces ATP from ADP in the presence of a proton gradient across the membrane. The V-type beta chain is a regulatory subunit. In Clostridium botulinum (strain 657 / Type Ba4), this protein is V-type ATP synthase beta chain.